We begin with the raw amino-acid sequence, 146 residues long: Small ribosomal subunit protein eS17 (146 aa).

Belongs to the eukaryotic ribosomal protein eS17 family. As to quaternary structure, component of the small ribosomal subunit (SSU). Mature N.crassa ribosomes consist of a small (40S) and a large (60S) subunit. The 40S small subunit contains 1 molecule of ribosomal RNA (18S rRNA) and at least 32 different proteins. The large 60S subunit contains 3 rRNA molecules (26S, 5.8S and 5S rRNA) and at least 42 different proteins.

The protein localises to the cytoplasm. In terms of biological role, component of the ribosome, a large ribonucleoprotein complex responsible for the synthesis of proteins in the cell. The small ribosomal subunit (SSU) binds messenger RNAs (mRNAs) and translates the encoded message by selecting cognate aminoacyl-transfer RNA (tRNA) molecules. The large subunit (LSU) contains the ribosomal catalytic site termed the peptidyl transferase center (PTC), which catalyzes the formation of peptide bonds, thereby polymerizing the amino acids delivered by tRNAs into a polypeptide chain. The nascent polypeptides leave the ribosome through a tunnel in the LSU and interact with protein factors that function in enzymatic processing, targeting, and the membrane insertion of nascent chains at the exit of the ribosomal tunnel. In Neurospora crassa (strain ATCC 24698 / 74-OR23-1A / CBS 708.71 / DSM 1257 / FGSC 987), this protein is Small ribosomal subunit protein eS17 (rps-17).